The primary structure comprises 350 residues: Arginine N-succinyltransferase (350 aa).

Position 125 (Leu-125) interacts with succinyl-CoA. His-229 serves as the catalytic Proton donor.

This sequence belongs to the arginine N-succinyltransferase family.

The catalysed reaction is succinyl-CoA + L-arginine = N(2)-succinyl-L-arginine + CoA + H(+). The protein operates within amino-acid degradation; L-arginine degradation via AST pathway; L-glutamate and succinate from L-arginine: step 1/5. Catalyzes the transfer of succinyl-CoA to arginine to produce N(2)-succinylarginine. This Yersinia pseudotuberculosis serotype O:3 (strain YPIII) protein is Arginine N-succinyltransferase.